Here is a 158-residue protein sequence, read N- to C-terminus: 6,7-dimethyl-8-ribityllumazine synthase (158 aa).

5-amino-6-(D-ribitylamino)uracil is bound by residues Phe23, 61–63 (SFE), and 85–87 (AVI). 90-91 (DT) is a binding site for (2S)-2-hydroxy-3-oxobutyl phosphate. The Proton donor role is filled by His93. Phe118 serves as a coordination point for 5-amino-6-(D-ribitylamino)uracil. (2S)-2-hydroxy-3-oxobutyl phosphate is bound at residue Arg132.

This sequence belongs to the DMRL synthase family.

It carries out the reaction (2S)-2-hydroxy-3-oxobutyl phosphate + 5-amino-6-(D-ribitylamino)uracil = 6,7-dimethyl-8-(1-D-ribityl)lumazine + phosphate + 2 H2O + H(+). Its pathway is cofactor biosynthesis; riboflavin biosynthesis; riboflavin from 2-hydroxy-3-oxobutyl phosphate and 5-amino-6-(D-ribitylamino)uracil: step 1/2. In terms of biological role, catalyzes the formation of 6,7-dimethyl-8-ribityllumazine by condensation of 5-amino-6-(D-ribitylamino)uracil with 3,4-dihydroxy-2-butanone 4-phosphate. This is the penultimate step in the biosynthesis of riboflavin. The polypeptide is 6,7-dimethyl-8-ribityllumazine synthase (Prochlorococcus marinus (strain NATL2A)).